Here is a 79-residue protein sequence, read N- to C-terminus: EAMZP30-47 protein (79 aa).

Positions 1–12 are enriched in low complexity; that stretch reads HAASPRGRPQQR. Residues 1–47 are disordered; the sequence is HAASPRGRPQQRSSRHGAEGPDTTRRGSCCSSSSSCCRPSTPRHPHN. Positions 16–25 are enriched in basic and acidic residues; it reads HGAEGPDTTR. Over residues 28–37 the composition is skewed to low complexity; sequence SCCSSSSSCC.

The protein resides in the membrane. The protein localises to the cell membrane. Its subcellular location is the cytoplasmic vesicle. It localises to the secretory vesicle. It is found in the rhoptry. This chain is EAMZP30-47 protein (CMC17), found in Eimeria acervulina (Coccidian parasite).